The following is a 290-amino-acid chain: ATP synthase gamma chain (290 aa).

This sequence belongs to the ATPase gamma chain family. F-type ATPases have 2 components, CF(1) - the catalytic core - and CF(0) - the membrane proton channel. CF(1) has five subunits: alpha(3), beta(3), gamma(1), delta(1), epsilon(1). CF(0) has three main subunits: a, b and c.

The protein localises to the cell membrane. Produces ATP from ADP in the presence of a proton gradient across the membrane. The gamma chain is believed to be important in regulating ATPase activity and the flow of protons through the CF(0) complex. This chain is ATP synthase gamma chain, found in Heliobacterium modesticaldum (strain ATCC 51547 / Ice1).